The sequence spans 159 residues: Eukaryotic translation initiation factor 5A-3 (159 aa).

Residues 1–12 show a composition bias toward basic and acidic residues; that stretch reads MSDEEHQFESKA. The tract at residues 1–21 is disordered; sequence MSDEEHQFESKADAGASKTYP. A Hypusine modification is found at Lys52.

This sequence belongs to the eIF-5A family. In terms of processing, lys-52 undergoes hypusination, a unique post-translational modification that consists in the addition of a butylamino group from spermidine to lysine side chain, leading to the formation of the unusual amino acid hypusine. eIF-5As are the only known proteins to undergo this modification, which is essential for their function.

Translation factor that promotes translation elongation and termination, particularly upon ribosome stalling at specific amino acid sequence contexts. Binds between the exit (E) and peptidyl (P) site of the ribosome and promotes rescue of stalled ribosome: specifically required for efficient translation of polyproline-containing peptides as well as other motifs that stall the ribosome. Acts as a ribosome quality control (RQC) cofactor by joining the RQC complex to facilitate peptidyl transfer during CAT tailing step. In Solanum lycopersicum (Tomato), this protein is Eukaryotic translation initiation factor 5A-3.